A 280-amino-acid chain; its full sequence is Urease accessory protein UreD (280 aa).

The protein belongs to the UreD family. In terms of assembly, ureD, UreF and UreG form a complex that acts as a GTP-hydrolysis-dependent molecular chaperone, activating the urease apoprotein by helping to assemble the nickel containing metallocenter of UreC. The UreE protein probably delivers the nickel.

The protein resides in the cytoplasm. Required for maturation of urease via the functional incorporation of the urease nickel metallocenter. The protein is Urease accessory protein UreD of Staphylococcus saprophyticus subsp. saprophyticus (strain ATCC 15305 / DSM 20229 / NCIMB 8711 / NCTC 7292 / S-41).